The primary structure comprises 353 residues: Holliday junction branch migration complex subunit RuvB (353 aa).

Residues 1–183 are large ATPase domain (RuvB-L); that stretch reads MNEPRIVAPQ…FGATYRLDFY (183 aa). Residues Leu22, Arg23, Gly64, Lys67, Thr68, Thr69, 130–132, Arg173, Tyr183, and Arg220 contribute to the ATP site; that span reads EDF. Thr68 contacts Mg(2+). The interval 184–254 is small ATPAse domain (RuvB-S); that stretch reads DTAALRAIVE…LARLALDQLA (71 aa). Residues 257–353 form a head domain (RuvB-H) region; it reads ELGLDEVDRL…HAASERSSDA (97 aa). Arg312 and Arg317 together coordinate DNA.

Belongs to the RuvB family. In terms of assembly, homohexamer. Forms an RuvA(8)-RuvB(12)-Holliday junction (HJ) complex. HJ DNA is sandwiched between 2 RuvA tetramers; dsDNA enters through RuvA and exits via RuvB. An RuvB hexamer assembles on each DNA strand where it exits the tetramer. Each RuvB hexamer is contacted by two RuvA subunits (via domain III) on 2 adjacent RuvB subunits; this complex drives branch migration. In the full resolvosome a probable DNA-RuvA(4)-RuvB(12)-RuvC(2) complex forms which resolves the HJ.

It localises to the cytoplasm. The enzyme catalyses ATP + H2O = ADP + phosphate + H(+). Functionally, the RuvA-RuvB-RuvC complex processes Holliday junction (HJ) DNA during genetic recombination and DNA repair, while the RuvA-RuvB complex plays an important role in the rescue of blocked DNA replication forks via replication fork reversal (RFR). RuvA specifically binds to HJ cruciform DNA, conferring on it an open structure. The RuvB hexamer acts as an ATP-dependent pump, pulling dsDNA into and through the RuvAB complex. RuvB forms 2 homohexamers on either side of HJ DNA bound by 1 or 2 RuvA tetramers; 4 subunits per hexamer contact DNA at a time. Coordinated motions by a converter formed by DNA-disengaged RuvB subunits stimulates ATP hydrolysis and nucleotide exchange. Immobilization of the converter enables RuvB to convert the ATP-contained energy into a lever motion, pulling 2 nucleotides of DNA out of the RuvA tetramer per ATP hydrolyzed, thus driving DNA branch migration. The RuvB motors rotate together with the DNA substrate, which together with the progressing nucleotide cycle form the mechanistic basis for DNA recombination by continuous HJ branch migration. Branch migration allows RuvC to scan DNA until it finds its consensus sequence, where it cleaves and resolves cruciform DNA. This is Holliday junction branch migration complex subunit RuvB from Thermomicrobium roseum (strain ATCC 27502 / DSM 5159 / P-2).